The primary structure comprises 167 residues: Insertion element IS1 protein InsB (167 aa).

The protein belongs to the transposase 27 family.

Absolutely required for transposition of IS1. The protein is Insertion element IS1 protein InsB (insB) of Escherichia coli.